A 617-amino-acid chain; its full sequence is V-type proton ATPase catalytic subunit A (617 aa).

T136 is modified (phosphothreonine). 250-257 (GAFGCGKT) lines the ATP pocket. S384 bears the Phosphoserine; by AMPK mark.

It belongs to the ATPase alpha/beta chains family. In terms of assembly, V-ATPase is a heteromultimeric enzyme made up of two complexes: the ATP-hydrolytic V1 complex and the proton translocation V0 complex. The V1 complex consists of three catalytic AB heterodimers that form a heterohexamer, three peripheral stalks each consisting of EG heterodimers, one central rotor including subunits D and F, and the regulatory subunits C and H. The proton translocation complex V0 consists of the proton transport subunit a, a ring of proteolipid subunits c9c'', rotary subunit d, subunits e and f, and the accessory subunits ATP6AP1/Ac45 and ATP6AP2/PRR. Interacts with the V0 complex V-ATPase subunit a4 ATP6V0A4. Interacts with WFS1. Interacts with alpha-crystallin B chain/CRYAB and with MTOR, forming a ternary complex. Phosphorylation at Ser-384 by AMPK down-regulates its enzyme activity.

Its subcellular location is the cytoplasm. It localises to the cytosol. It is found in the cytoplasmic vesicle. The protein resides in the secretory vesicle. The protein localises to the clathrin-coated vesicle membrane. Its subcellular location is the lysosome. The enzyme catalyses ATP + H2O + 4 H(+)(in) = ADP + phosphate + 5 H(+)(out). Its activity is regulated as follows. ATP hydrolysis occurs at the interface between the nucleotide-binding domains of subunits A and B. ATP hydrolysis triggers a conformational change in the subunits D and F, which induces a shift of subunit d. The c-ring is subsequently rotated and results in a continuous proton translocation across the membrane. Functionally, catalytic subunit of the V1 complex of vacuolar(H+)-ATPase (V-ATPase), a multisubunit enzyme composed of a peripheral complex (V1) that hydrolyzes ATP and a membrane integral complex (V0) that translocates protons. V-ATPase is responsible for acidifying and maintaining the pH of intracellular compartments and in some cell types, is targeted to the plasma membrane, where it is responsible for acidifying the extracellular environment. In aerobic conditions, involved in intracellular iron homeostasis, thus triggering the activity of Fe(2+) prolyl hydroxylase (PHD) enzymes, and leading to HIF1A hydroxylation and subsequent proteasomal degradation. May play a role in neurite development and synaptic connectivity. This chain is V-type proton ATPase catalytic subunit A (ATP6V1A), found in Sus scrofa (Pig).